The primary structure comprises 1273 residues: Probable methionine synthase (1273 aa).

The Hcy-binding domain occupies 7–327; that stretch reads FKELADIAKE…DHINAMYKAV (321 aa). C249, C312, and C313 together coordinate Zn(2+). The Pterin-binding domain occupies 360–621; the sequence is FVNIGERCNV…IDKPLLQLLE (262 aa). A B12-binding N-terminal domain is found at 652 to 749; that stretch reads KTDEWRNTSV…FMDAERQANI (98 aa). Methylcob(III)alamin is bound by residues E699, 772–776, H775, S820, T824, and A876; that span reads GDVHD. The B12-binding domain maps to 762–897; it reads QGTVVIATVK…DMTVRDAFLQ (136 aa). Residues 927–1273 form the AdoMet activation domain; the sequence is SLKDRRFVAL…LSPIIGYELD (347 aa). S-adenosyl-L-methionine-binding positions include D977, R1171, and 1225-1226; that span reads YF.

This sequence belongs to the vitamin-B12 dependent methionine synthase family. Requires methylcob(III)alamin as cofactor. The cofactor is Zn(2+).

It carries out the reaction (6S)-5-methyl-5,6,7,8-tetrahydrofolate + L-homocysteine = (6S)-5,6,7,8-tetrahydrofolate + L-methionine. It participates in amino-acid biosynthesis; L-methionine biosynthesis via de novo pathway; L-methionine from L-homocysteine (MetH route): step 1/1. Its function is as follows. Catalyzes the transfer of a methyl group from methyl-cobalamin to homocysteine, yielding enzyme-bound cob(I)alamin and methionine. Subsequently, remethylates the cofactor using methyltetrahydrofolate. The sequence is that of Probable methionine synthase (metr-1) from Caenorhabditis briggsae.